The chain runs to 778 residues: Arf-GAP with coiled-coil, ANK repeat and PH domain-containing protein 2 (778 aa).

The BAR domain maps to 1 to 226 (MKMTVDFEEC…MKDLGAQLDR (226 aa)). A PH domain is found at 266-361 (GIVMEGYLFK…WIKAVQTSIA (96 aa)). The tract at residues 371–391 (SEKLDKKSSPSTGSLDSGNES) is disordered. The span at 379-388 (SPSTGSLDSG) shows a compositional bias: polar residues. Residues Ser384 and Ser387 each carry the phosphoserine modification. Residues 399-520 (ESALQRVQCI…KFVDKYSISL (122 aa)) form the Arf-GAP domain. Residues 414–437 (CCDCGLADPRWASINLGITLCIEC) form a C4-type zinc finger. The residue at position 521 (Ser521) is a Phosphoserine. The disordered stretch occupies residues 540–599 (SISKFGPGDQVRASAQSSVRSNDSGIQQSSDDGRESLPSTVSANSLYEPEGERQDSSMFL). Polar residues predominate over residues 552 to 569 (ASAQSSVRSNDSGIQQSS). Phosphoserine is present on residues Ser581 and Ser584. ANK repeat units follow at residues 640–669 (NKAT…NVNQ), 673–702 (QGRG…NQHA), and 706–735 (EGKD…NEEM). At Tyr742 the chain carries Phosphotyrosine. Ser775 is modified (phosphoserine).

In terms of assembly, interacts (via KANK domains) with RAB35 (GTP-bound form); the interaction is direct and probably recruits ACAP2 to membranes including plasma membrane. Interacts with MICALL1; the interaction is indirect through RAB35. Widely expressed. Highest level in lung.

It localises to the cell membrane. Its subcellular location is the endosome membrane. With respect to regulation, GAP activity stimulated by phosphatidylinositol 4,5-bisphosphate (PIP2) and phosphatidic acid. Functionally, GTPase-activating protein (GAP) for ADP ribosylation factor 6 (ARF6). Doesn't show GAP activity for RAB35. This Homo sapiens (Human) protein is Arf-GAP with coiled-coil, ANK repeat and PH domain-containing protein 2 (ACAP2).